Here is a 110-residue protein sequence, read N- to C-terminus: Small ribosomal subunit protein mS33 (110 aa).

Positions 84 to 95 (KRRGKGAPKKMK) are enriched in basic residues. Residues 84 to 110 (KRRGKGAPKKMKKDAAATAKGKGKKKK) are disordered.

Belongs to the mitochondrion-specific ribosomal protein mS33 family. In terms of assembly, component of the mitochondrial small ribosomal subunit (mt-SSU). Mature yeast 74S mitochondrial ribosomes consist of a small (37S) and a large (54S) subunit. The 37S small subunit contains a 15S ribosomal RNA (15S mt-rRNA) and 34 different proteins. The 54S large subunit contains a 21S rRNA (21S mt-rRNA) and 46 different proteins.

Its subcellular location is the mitochondrion. Its function is as follows. Component of the mitochondrial ribosome (mitoribosome), a dedicated translation machinery responsible for the synthesis of mitochondrial genome-encoded proteins, including at least some of the essential transmembrane subunits of the mitochondrial respiratory chain. The mitoribosomes are attached to the mitochondrial inner membrane and translation products are cotranslationally integrated into the membrane. In Saccharomyces cerevisiae (strain ATCC 204508 / S288c) (Baker's yeast), this protein is Small ribosomal subunit protein mS33 (RSM27).